The following is a 488-amino-acid chain: Annexin A7 (488 aa).

Residues 1-18 (MSYPGYPPTGYPPFPGYP) show a composition bias toward pro residues. 2 disordered regions span residues 1-49 (MSYP…YPQV) and 71-150 (GYPG…NTES). The interval 1–143 (MSYPGYPPTG…QYPGGQPTYP (143 aa)) is repeat-rich region. The interval 5 to 20 (GYPPTGYPPFPGYPPA) is 3 X 5 AA tandem repeats of G-Y-P-P-X. Positions 89–102 (PGQGFGVPPGGAGF) are enriched in gly residues. Annexin repeat units lie at residues 185 to 256 (FDAM…ALFM), 257 to 328 (PPTY…SMCQ), 340 to 412 (QMAQ…TILQ), and 416 to 487 (NRPA…AIVG). Lysine 233 is subject to N6-acetyllysine.

This sequence belongs to the annexin family. Interacts with PDCD6.

In terms of biological role, calcium/phospholipid-binding protein which promotes membrane fusion and is involved in exocytosis. This is Annexin A7 (ANXA7) from Macaca fascicularis (Crab-eating macaque).